Reading from the N-terminus, the 474-residue chain is Aspartyl/glutamyl-tRNA(Asn/Gln) amidotransferase subunit B (474 aa).

The protein belongs to the GatB/GatE family. GatB subfamily. Heterotrimer of A, B and C subunits.

It carries out the reaction L-glutamyl-tRNA(Gln) + L-glutamine + ATP + H2O = L-glutaminyl-tRNA(Gln) + L-glutamate + ADP + phosphate + H(+). It catalyses the reaction L-aspartyl-tRNA(Asn) + L-glutamine + ATP + H2O = L-asparaginyl-tRNA(Asn) + L-glutamate + ADP + phosphate + 2 H(+). In terms of biological role, allows the formation of correctly charged Asn-tRNA(Asn) or Gln-tRNA(Gln) through the transamidation of misacylated Asp-tRNA(Asn) or Glu-tRNA(Gln) in organisms which lack either or both of asparaginyl-tRNA or glutaminyl-tRNA synthetases. The reaction takes place in the presence of glutamine and ATP through an activated phospho-Asp-tRNA(Asn) or phospho-Glu-tRNA(Gln). This chain is Aspartyl/glutamyl-tRNA(Asn/Gln) amidotransferase subunit B, found in Helicobacter hepaticus (strain ATCC 51449 / 3B1).